Consider the following 158-residue polypeptide: Phosphopantetheine adenylyltransferase (158 aa).

Ser9 is a substrate binding site. ATP-binding positions include 9 to 10 (SF) and His17. Substrate contacts are provided by Lys41, Val73, and Lys87. ATP is bound by residues 88-90 (GLR), Glu98, and 122-128 (YSFVSSS).

Belongs to the bacterial CoaD family. In terms of assembly, homohexamer. The cofactor is Mg(2+).

The protein resides in the cytoplasm. It carries out the reaction (R)-4'-phosphopantetheine + ATP + H(+) = 3'-dephospho-CoA + diphosphate. It functions in the pathway cofactor biosynthesis; coenzyme A biosynthesis; CoA from (R)-pantothenate: step 4/5. Its function is as follows. Reversibly transfers an adenylyl group from ATP to 4'-phosphopantetheine, yielding dephospho-CoA (dPCoA) and pyrophosphate. The sequence is that of Phosphopantetheine adenylyltransferase from Mycobacterium sp. (strain JLS).